The primary structure comprises 877 residues: Alanine--tRNA ligase (877 aa).

H567, H571, C669, and H673 together coordinate Zn(2+).

It belongs to the class-II aminoacyl-tRNA synthetase family. The cofactor is Zn(2+).

It localises to the cytoplasm. The catalysed reaction is tRNA(Ala) + L-alanine + ATP = L-alanyl-tRNA(Ala) + AMP + diphosphate. Functionally, catalyzes the attachment of alanine to tRNA(Ala) in a two-step reaction: alanine is first activated by ATP to form Ala-AMP and then transferred to the acceptor end of tRNA(Ala). Also edits incorrectly charged Ser-tRNA(Ala) and Gly-tRNA(Ala) via its editing domain. The sequence is that of Alanine--tRNA ligase from Rickettsia rickettsii (strain Iowa).